The chain runs to 334 residues: Putative carboxypeptidase VC_A0337 (334 aa).

The Nucleophile role is filled by Ser112. Catalysis depends on charge relay system residues Glu234 and His302.

Belongs to the peptidase S66 family.

The protein is Putative carboxypeptidase VC_A0337 of Vibrio cholerae serotype O1 (strain ATCC 39315 / El Tor Inaba N16961).